The following is a 177-amino-acid chain: Adenine phosphoribosyltransferase (177 aa).

Belongs to the purine/pyrimidine phosphoribosyltransferase family. In terms of assembly, homodimer.

It localises to the cytoplasm. It catalyses the reaction AMP + diphosphate = 5-phospho-alpha-D-ribose 1-diphosphate + adenine. It functions in the pathway purine metabolism; AMP biosynthesis via salvage pathway; AMP from adenine: step 1/1. Functionally, catalyzes a salvage reaction resulting in the formation of AMP, that is energically less costly than de novo synthesis. The chain is Adenine phosphoribosyltransferase from Chlorobium phaeovibrioides (strain DSM 265 / 1930) (Prosthecochloris vibrioformis (strain DSM 265)).